Consider the following 571-residue polypeptide: Proline--tRNA ligase (571 aa).

The protein belongs to the class-II aminoacyl-tRNA synthetase family. ProS type 1 subfamily. In terms of assembly, homodimer.

Its subcellular location is the cytoplasm. It catalyses the reaction tRNA(Pro) + L-proline + ATP = L-prolyl-tRNA(Pro) + AMP + diphosphate. Its function is as follows. Catalyzes the attachment of proline to tRNA(Pro) in a two-step reaction: proline is first activated by ATP to form Pro-AMP and then transferred to the acceptor end of tRNA(Pro). As ProRS can inadvertently accommodate and process non-cognate amino acids such as alanine and cysteine, to avoid such errors it has two additional distinct editing activities against alanine. One activity is designated as 'pretransfer' editing and involves the tRNA(Pro)-independent hydrolysis of activated Ala-AMP. The other activity is designated 'posttransfer' editing and involves deacylation of mischarged Ala-tRNA(Pro). The misacylated Cys-tRNA(Pro) is not edited by ProRS. This Shewanella sp. (strain W3-18-1) protein is Proline--tRNA ligase.